The chain runs to 88 residues: Small ribosomal subunit protein uS17 (88 aa).

It belongs to the universal ribosomal protein uS17 family. In terms of assembly, part of the 30S ribosomal subunit.

Its function is as follows. One of the primary rRNA binding proteins, it binds specifically to the 5'-end of 16S ribosomal RNA. This is Small ribosomal subunit protein uS17 from Prochlorococcus marinus (strain MIT 9215).